The following is a 259-amino-acid chain: Thiazole synthase (259 aa).

Catalysis depends on K99, which acts as the Schiff-base intermediate with DXP. 1-deoxy-D-xylulose 5-phosphate-binding positions include G161, 187-188, and 209-210; these read AG and NT.

It belongs to the ThiG family. As to quaternary structure, homotetramer. Forms heterodimers with either ThiH or ThiS.

The protein localises to the cytoplasm. The enzyme catalyses [ThiS sulfur-carrier protein]-C-terminal-Gly-aminoethanethioate + 2-iminoacetate + 1-deoxy-D-xylulose 5-phosphate = [ThiS sulfur-carrier protein]-C-terminal Gly-Gly + 2-[(2R,5Z)-2-carboxy-4-methylthiazol-5(2H)-ylidene]ethyl phosphate + 2 H2O + H(+). It functions in the pathway cofactor biosynthesis; thiamine diphosphate biosynthesis. Functionally, catalyzes the rearrangement of 1-deoxy-D-xylulose 5-phosphate (DXP) to produce the thiazole phosphate moiety of thiamine. Sulfur is provided by the thiocarboxylate moiety of the carrier protein ThiS. In vitro, sulfur can be provided by H(2)S. This Nautilia profundicola (strain ATCC BAA-1463 / DSM 18972 / AmH) protein is Thiazole synthase.